The chain runs to 92 residues: Cell division topological specificity factor (92 aa).

This sequence belongs to the MinE family.

In terms of biological role, prevents the cell division inhibition by proteins MinC and MinD at internal division sites while permitting inhibition at polar sites. This ensures cell division at the proper site by restricting the formation of a division septum at the midpoint of the long axis of the cell. The chain is Cell division topological specificity factor from Gluconobacter oxydans (strain 621H) (Gluconobacter suboxydans).